We begin with the raw amino-acid sequence, 363 residues long: UDP-N-acetylglucosamine--N-acetylmuramyl-(pentapeptide) pyrophosphoryl-undecaprenol N-acetylglucosamine transferase (363 aa).

UDP-N-acetyl-alpha-D-glucosamine contacts are provided by residues 21 to 23, Asn129, Arg170, Ser196, and Gln290; that span reads TGG.

It belongs to the glycosyltransferase 28 family. MurG subfamily.

It is found in the cell inner membrane. It catalyses the reaction di-trans,octa-cis-undecaprenyl diphospho-N-acetyl-alpha-D-muramoyl-L-alanyl-D-glutamyl-meso-2,6-diaminopimeloyl-D-alanyl-D-alanine + UDP-N-acetyl-alpha-D-glucosamine = di-trans,octa-cis-undecaprenyl diphospho-[N-acetyl-alpha-D-glucosaminyl-(1-&gt;4)]-N-acetyl-alpha-D-muramoyl-L-alanyl-D-glutamyl-meso-2,6-diaminopimeloyl-D-alanyl-D-alanine + UDP + H(+). It participates in cell wall biogenesis; peptidoglycan biosynthesis. In terms of biological role, cell wall formation. Catalyzes the transfer of a GlcNAc subunit on undecaprenyl-pyrophosphoryl-MurNAc-pentapeptide (lipid intermediate I) to form undecaprenyl-pyrophosphoryl-MurNAc-(pentapeptide)GlcNAc (lipid intermediate II). The sequence is that of UDP-N-acetylglucosamine--N-acetylmuramyl-(pentapeptide) pyrophosphoryl-undecaprenol N-acetylglucosamine transferase from Synechococcus sp. (strain ATCC 27144 / PCC 6301 / SAUG 1402/1) (Anacystis nidulans).